Consider the following 549-residue polypeptide: Hydroxylamine reductase (549 aa).

Residues Cys-5, Cys-8, Cys-17, and Cys-23 each coordinate [4Fe-4S] cluster. The hybrid [4Fe-2O-2S] cluster site is built by His-243, Glu-267, Cys-311, Cys-403, Cys-431, Cys-456, Glu-491, and Lys-493. Residue Cys-403 is modified to Cysteine persulfide.

Belongs to the HCP family. It depends on [4Fe-4S] cluster as a cofactor. Requires hybrid [4Fe-2O-2S] cluster as cofactor.

The protein resides in the cytoplasm. The catalysed reaction is A + NH4(+) + H2O = hydroxylamine + AH2 + H(+). In terms of biological role, catalyzes the reduction of hydroxylamine to form NH(3) and H(2)O. This Desulfitobacterium hafniense (strain Y51) protein is Hydroxylamine reductase.